Here is a 471-residue protein sequence, read N- to C-terminus: Argininosuccinate lyase (471 aa).

This sequence belongs to the lyase 1 family. Argininosuccinate lyase subfamily.

The protein localises to the cytoplasm. It catalyses the reaction 2-(N(omega)-L-arginino)succinate = fumarate + L-arginine. It participates in amino-acid biosynthesis; L-arginine biosynthesis; L-arginine from L-ornithine and carbamoyl phosphate: step 3/3. The chain is Argininosuccinate lyase from Acidiphilium cryptum (strain JF-5).